Here is a 103-residue protein sequence, read N- to C-terminus: Protamine-3 (103 aa).

Positions 1–103 are disordered; sequence MGSRCAKLNT…QSPEPKRTPS (103 aa). The span at 10–21 shows a compositional bias: low complexity; sequence TGQSPGHSPGHS. Acidic residues predominate over residues 50-66; that stretch reads GEEEEEEEEEGEEEEKE. Positions 78 to 90 are enriched in basic and acidic residues; it reads EPERQEEGHKDNA. S95 carries the post-translational modification Phosphoserine.

Belongs to the protamine P3 family.

Its subcellular location is the nucleus. The protein localises to the chromosome. In terms of biological role, protamines substitute for histones in the chromatin of sperm during the haploid phase of spermatogenesis. They compact sperm DNA into a highly condensed, stable and inactive complex. This chain is Protamine-3 (PRM3), found in Homo sapiens (Human).